A 185-amino-acid polypeptide reads, in one-letter code: Ribosome-recycling factor (185 aa).

It belongs to the RRF family.

It is found in the cytoplasm. Functionally, responsible for the release of ribosomes from messenger RNA at the termination of protein biosynthesis. May increase the efficiency of translation by recycling ribosomes from one round of translation to another. The chain is Ribosome-recycling factor from Edwardsiella ictaluri (strain 93-146).